Reading from the N-terminus, the 119-residue chain is Holo-[acyl-carrier-protein] synthase (119 aa).

2 residues coordinate Mg(2+): aspartate 8 and glutamate 58.

It belongs to the P-Pant transferase superfamily. AcpS family. Requires Mg(2+) as cofactor.

Its subcellular location is the cytoplasm. The enzyme catalyses apo-[ACP] + CoA = holo-[ACP] + adenosine 3',5'-bisphosphate + H(+). Functionally, transfers the 4'-phosphopantetheine moiety from coenzyme A to a Ser of acyl-carrier-protein. The polypeptide is Holo-[acyl-carrier-protein] synthase (Geobacillus sp. (strain WCH70)).